Here is a 121-residue protein sequence, read N- to C-terminus: Holin-like protein CidA (121 aa).

4 helical membrane-spanning segments follow: residues 3 to 23, 30 to 50, 58 to 78, and 89 to 109; these read WWKL…GEWI, PVPG…FNLV, GADF…VAVI, and IDLI…TGLL.

Belongs to the CidA/LrgA family. CidA subfamily.

The protein localises to the cell membrane. Functionally, increases the activity of extracellular murein hydrolases possibly by mediating their export via hole formation. Inhibited by the antiholin-like proteins LrgAB. In an unstressed cell, the LrgAB products probably inhibit the function of the CidA protein. When a cell is stressed by the addition of antibiotics or by other factors in the environment, CidA possibly oligomerizes within the bacterial cell membrane, creating lesions that disrupt the proton motive force, which in turn results in loss of cell viability. These lesions are also hypothesized to regulate the subsequent cell lysis by either allowing the murein hydrolases access to the cell wall substrate and/or regulating their activity by a possible change in the cell wall pH that results from loss of membrane potential. The chain is Holin-like protein CidA from Bacillus cereus (strain ATCC 10987 / NRS 248).